Reading from the N-terminus, the 122-residue chain is Ribonuclease P protein component (122 aa).

The protein belongs to the RnpA family. As to quaternary structure, consists of a catalytic RNA component (M1 or rnpB) and a protein subunit.

It carries out the reaction Endonucleolytic cleavage of RNA, removing 5'-extranucleotides from tRNA precursor.. In terms of biological role, RNaseP catalyzes the removal of the 5'-leader sequence from pre-tRNA to produce the mature 5'-terminus. It can also cleave other RNA substrates such as 4.5S RNA. The protein component plays an auxiliary but essential role in vivo by binding to the 5'-leader sequence and broadening the substrate specificity of the ribozyme. The chain is Ribonuclease P protein component from Lactobacillus gasseri (strain ATCC 33323 / DSM 20243 / BCRC 14619 / CIP 102991 / JCM 1131 / KCTC 3163 / NCIMB 11718 / NCTC 13722 / AM63).